A 193-amino-acid polypeptide reads, in one-letter code: Penicillin-binding protein activator LpoB (193 aa).

Positions 1-16 are cleaved as a signal peptide; that stretch reads MKKYLGVILAALVLTG. The N-palmitoyl cysteine moiety is linked to residue Cys17. A lipid anchor (S-diacylglycerol cysteine) is attached at Cys17. The interval 17-55 is disordered; the sequence is CPSRPPEPTEPPATIEPVEPQVPTTPTLPPGESVPQPPK. Residues 28-41 show a composition bias toward low complexity; that stretch reads PATIEPVEPQVPTT.

The protein belongs to the LpoB family. In terms of assembly, interacts with PBP1b.

The protein resides in the cell outer membrane. Functionally, regulator of peptidoglycan synthesis that is essential for the function of penicillin-binding protein 1B (PBP1b). This is Penicillin-binding protein activator LpoB from Pectobacterium carotovorum subsp. carotovorum (strain PC1).